We begin with the raw amino-acid sequence, 97 residues long: Co-chaperonin GroES (97 aa).

Belongs to the GroES chaperonin family. Heptamer of 7 subunits arranged in a ring. Interacts with the chaperonin GroEL.

The protein resides in the cytoplasm. Functionally, together with the chaperonin GroEL, plays an essential role in assisting protein folding. The GroEL-GroES system forms a nano-cage that allows encapsulation of the non-native substrate proteins and provides a physical environment optimized to promote and accelerate protein folding. GroES binds to the apical surface of the GroEL ring, thereby capping the opening of the GroEL channel. This chain is Co-chaperonin GroES, found in Salmonella agona (strain SL483).